A 77-amino-acid polypeptide reads, in one-letter code: Conotoxin King-Kong 2 (77 aa).

The first 22 residues, 1–22 (MKLTCMMIVAVLFLTAWTFVTA), serve as a signal peptide directing secretion. The propeptide occupies 23-49 (DDSGNGLENLFSKAHHEMKNPEASNLN). 3 disulfide bridges follow: Cys-52–Cys-67, Cys-59–Cys-71, and Cys-66–Cys-76. Cysteine amide is present on Cys-76.

It belongs to the conotoxin O1 superfamily. Expressed by the venom duct.

Its subcellular location is the secreted. This is Conotoxin King-Kong 2 from Conus textile (Cloth-of-gold cone).